Consider the following 376-residue polypeptide: 1-acyl-sn-glycerol-3-phosphate acyltransferase gamma (376 aa).

The Cytoplasmic portion of the chain corresponds to 1–124 (MGLLAYLKTQ…LGSSKVLAKR (124 aa)). Positions 96–101 (HNFEID) match the HXXXXD motif motif. Residues 125–145 (ELLCVPLIGWTWYFLEIVFCK) form a helical membrane-spanning segment. Residues 146 to 316 (RKWEEDRDTV…TLLNFLCWAT (171 aa)) are Lumenal-facing. A helical transmembrane segment spans residues 317-339 (ILLSPLFSFVLGVFASGSPLLIL). The Cytoplasmic portion of the chain corresponds to 340 to 376 (TFLGFVGAASFGVRRLIGVTEIEKGSSYGNQELKKKE).

Belongs to the 1-acyl-sn-glycerol-3-phosphate acyltransferase family. In terms of tissue distribution, widely expressed. Mainly expressed in testis, kidney and liver (at protein level).

The protein resides in the endoplasmic reticulum membrane. It is found in the nucleus envelope. It catalyses the reaction a 1-acyl-sn-glycero-3-phosphate + an acyl-CoA = a 1,2-diacyl-sn-glycero-3-phosphate + CoA. The catalysed reaction is pentadecanoyl-CoA + 1-(9Z-octadecenoyl)-sn-glycero-3-phosphate = 1-(9Z)-octadecenoyl-2-pentadecanoyl-sn-glycero-3-phosphate + CoA. The enzyme catalyses heptadecanoyl-CoA + 1-(9Z-octadecenoyl)-sn-glycero-3-phosphate = 1-(9Z)-octadecenoyl-2-heptadecanoyl-sn-glycero-3-phosphate + CoA. It carries out the reaction 1-(9Z-octadecenoyl)-sn-glycero-3-phosphate + octadecanoyl-CoA = 1-(9Z-octadecenoyl)-2-octadecanoyl-sn-glycero-3-phosphate + CoA. It catalyses the reaction nonadecanoyl-CoA + 1-(9Z-octadecenoyl)-sn-glycero-3-phosphate = 1-(9Z)-octadecenoyl-2-nonadecanoyl-sn-glycero-3-phosphate + CoA. The catalysed reaction is 1-(9Z-octadecenoyl)-sn-glycero-3-phosphate + (5Z,8Z,11Z,14Z)-eicosatetraenoyl-CoA = 1-(9Z)-octadecenoyl-2-(5Z,8Z,11Z,14Z)-eicosatetraenoyl-sn-glycero-3-phosphate + CoA. The enzyme catalyses 1-(9Z-octadecenoyl)-sn-glycero-3-phosphate + (9Z)-octadecenoyl-CoA = 1,2-di-(9Z-octadecenoyl)-sn-glycero-3-phosphate + CoA. It carries out the reaction 1-(9Z-octadecenoyl)-sn-glycero-3-phosphate + (9Z,12Z)-octadecadienoyl-CoA = 1-(9Z)-octadecenoyl-2-(9Z,12Z)-octadecadienoyl-sn-glycero-3-phosphate + CoA. It catalyses the reaction 1-(9Z-octadecenoyl)-sn-glycero-3-phosphocholine + (5Z,8Z,11Z,14Z)-eicosatetraenoyl-CoA = 1-(9Z)-octadecenoyl-2-(5Z,8Z,11Z,14Z)-icosatetraenoyl-sn-glycero-3-phosphocholine + CoA. The catalysed reaction is 1-(9Z-octadecenoyl)-sn-glycero-3-phospho-(1D-myo-inositol) + (5Z,8Z,11Z,14Z)-eicosatetraenoyl-CoA = 1-(9Z-octadecenoyl)-2-(5Z,8Z,11Z,14Z-eicosatetraenoyl)-sn-glycero-3-phospho-1D-myo-inositol + CoA. The enzyme catalyses 1-(9Z-octadecenoyl)-sn-glycero-3-phospho-L-serine + (5Z,8Z,11Z,14Z)-eicosatetraenoyl-CoA = 1-(9Z-octadecenoyl)-2-(5Z,8Z,11Z,14Z-eicosatetraenoyl)-sn-glycero-3-phospho-L-serine + CoA. It carries out the reaction 1-hexadecanoyl-sn-glycero-3-phosphate + (9Z)-octadecenoyl-CoA = 1-hexadecanoyl-2-(9Z-octadecenoyl)-sn-glycero-3-phosphate + CoA. It catalyses the reaction 1-hexadecanoyl-sn-glycero-3-phosphate + (5Z,8Z,11Z,14Z)-eicosatetraenoyl-CoA = 1-hexadecanoyl-2-(5Z,8Z,11Z,14Z-eicosatetraenoyl)-sn-glycero-3-phosphate + CoA. The catalysed reaction is 1-heptadecanoyl-sn-glycero-3-phosphate + (5Z,8Z,11Z,14Z)-eicosatetraenoyl-CoA = 1-heptadecanoyl-2-(5Z,8Z,11Z,14Z)-eicosatetraenoyl-sn-glycero-3-phosphate + CoA. The enzyme catalyses 1-octadecanoyl-sn-glycero-3-phosphate + (9Z)-octadecenoyl-CoA = 1-octadecanoyl-2-(9Z-octadecenoyl)-sn-glycero-3-phosphate + CoA. It carries out the reaction 1-octadecanoyl-sn-glycero-3-phosphate + (5Z,8Z,11Z,14Z)-eicosatetraenoyl-CoA = 1-octadecanoyl-2-(5Z,8Z,11Z,14Z-eicosatetraenoyl)-sn-glycero-3-phosphate + CoA. It catalyses the reaction 1-(9Z-octadecenoyl)-sn-glycero-3-phosphate + hexadecanoyl-CoA = 1-hexadecanoyl-2-(9Z-octadecenoyl)-sn-glycero-3-phosphate + CoA. The catalysed reaction is 1-O-(9Z-octadecenyl)-sn-glycero-3-phosphate + (5Z,8Z,11Z,14Z)-eicosatetraenoyl-CoA = 1-O-(9Z-octadecenyl)-2-(5Z,8Z,11Z,14Z-eicosatetraenoyl)-sn-glycero-3-phosphate + CoA. The enzyme catalyses a 1-acyl-sn-glycero-3-phospho-(1D-myo-inositol) + (5Z,8Z,11Z,14Z)-eicosatetraenoyl-CoA = a 1-acyl-2-(5Z,8Z,11Z,14Z-eicosatetraenoyl)-sn-glycero-3-phospho-(1D-myo-inositol) + CoA. Its pathway is phospholipid metabolism; CDP-diacylglycerol biosynthesis; CDP-diacylglycerol from sn-glycerol 3-phosphate: step 2/3. Its activity is regulated as follows. In males, activity increases in an age-dependent fashion, maybe derived from the induction by sex-hormones. In terms of biological role, converts 1-acyl-sn-glycerol-3-phosphate (lysophosphatidic acid or LPA) into 1,2-diacyl-sn-glycerol-3-phosphate (phosphatidic acid or PA) by incorporating an acyl moiety at the sn-2 position of the glycerol backbone. Acts on LPA containing saturated or unsaturated fatty acids C16:0-C20:4 at the sn-1 position using C18:1, C20:4 or C18:2-CoA as the acyl donor. Also acts on lysophosphatidylcholine, lysophosphatidylinositol and lysophosphatidylserine using C18:1 or C20:4-CoA. Has a preference for arachidonoyl-CoA as a donor. Also has a modest lysophosphatidylinositol acyltransferase (LPIAT) activity, converts lysophosphatidylinositol (LPI) into phosphatidylinositol. This is 1-acyl-sn-glycerol-3-phosphate acyltransferase gamma from Mus musculus (Mouse).